An 822-amino-acid polypeptide reads, in one-letter code: Valine--tRNA ligase (822 aa).

The 'HIGH' region motif lies at 41 to 51; that stretch reads PNVTGQLHLGH. The short motif at 511–515 is the 'KMSKS' region element; the sequence is KMSKS. Position 514 (lysine 514) interacts with ATP. Positions 765–822 form a coiled coil; sequence EQKGRELKEIQFLKSEILRAEKILTNKGFLEKAPREKIDLERTKLEKLKEKLAFYEKK.

This sequence belongs to the class-I aminoacyl-tRNA synthetase family. ValS type 1 subfamily. In terms of assembly, monomer.

It is found in the cytoplasm. It catalyses the reaction tRNA(Val) + L-valine + ATP = L-valyl-tRNA(Val) + AMP + diphosphate. Functionally, catalyzes the attachment of valine to tRNA(Val). As ValRS can inadvertently accommodate and process structurally similar amino acids such as threonine, to avoid such errors, it has a 'posttransfer' editing activity that hydrolyzes mischarged Thr-tRNA(Val) in a tRNA-dependent manner. The polypeptide is Valine--tRNA ligase (Mesomycoplasma hyopneumoniae (strain 232) (Mycoplasma hyopneumoniae)).